Here is a 117-residue protein sequence, read N- to C-terminus: Large ribosomal subunit protein uL18 (117 aa).

This sequence belongs to the universal ribosomal protein uL18 family. Part of the 50S ribosomal subunit; part of the 5S rRNA/L5/L18/L25 subcomplex. Contacts the 5S and 23S rRNAs.

In terms of biological role, this is one of the proteins that bind and probably mediate the attachment of the 5S RNA into the large ribosomal subunit, where it forms part of the central protuberance. The protein is Large ribosomal subunit protein uL18 of Francisella tularensis subsp. novicida (strain U112).